Reading from the N-terminus, the 338-residue chain is tRNA-specific 2-thiouridylase MnmA (338 aa).

ATP is bound by residues 6 to 13 (ALSGGVDS) and Met32. Residue Cys92 is the Nucleophile of the active site. A disulfide bond links Cys92 and Cys186. Position 116 (Gly116) interacts with ATP. The segment at 134–136 (KDQ) is interaction with tRNA. Cys186 serves as the catalytic Cysteine persulfide intermediate. The interval 288–289 (RY) is interaction with tRNA.

It belongs to the MnmA/TRMU family.

Its subcellular location is the cytoplasm. It catalyses the reaction S-sulfanyl-L-cysteinyl-[protein] + uridine(34) in tRNA + AH2 + ATP = 2-thiouridine(34) in tRNA + L-cysteinyl-[protein] + A + AMP + diphosphate + H(+). Its function is as follows. Catalyzes the 2-thiolation of uridine at the wobble position (U34) of tRNA, leading to the formation of s(2)U34. The chain is tRNA-specific 2-thiouridylase MnmA from Campylobacter fetus subsp. fetus (strain 82-40).